The chain runs to 429 residues: Chaperone SurA (429 aa).

Residues 1 to 18 form the signal peptide; it reads MFKRIALVCALFSGVCFA. PpiC domains are found at residues 170 to 271 and 281 to 380; these read NLTY…KLVA and ITQT…EVIA.

Its subcellular location is the periplasm. It carries out the reaction [protein]-peptidylproline (omega=180) = [protein]-peptidylproline (omega=0). Its function is as follows. Chaperone involved in the correct folding and assembly of outer membrane proteins. Recognizes specific patterns of aromatic residues and the orientation of their side chains, which are found more frequently in integral outer membrane proteins. May act in both early periplasmic and late outer membrane-associated steps of protein maturation. This is Chaperone SurA from Legionella pneumophila (strain Lens).